The following is a 352-amino-acid chain: Photosystem II D2 protein (352 aa).

Position 2 is an N-acetylthreonine (T2). T2 is modified (phosphothreonine). Residues C40–T60 form a helical membrane-spanning segment. Position 117 (H117) interacts with chlorophyll a. Residues G124–P140 traverse the membrane as a helical segment. Pheophytin a contacts are provided by Q129 and N142. Residues V152–A165 traverse the membrane as a helical segment. H197 lines the chlorophyll a pocket. A helical membrane pass occupies residues A207–D227. Positions 214 and 261 each coordinate a plastoquinone. Position 214 (H214) interacts with Fe cation. H268 serves as a coordination point for Fe cation. A helical membrane pass occupies residues G278 to R294.

It belongs to the reaction center PufL/M/PsbA/D family. In terms of assembly, PSII is composed of 1 copy each of membrane proteins PsbA, PsbB, PsbC, PsbD, PsbE, PsbF, PsbH, PsbI, PsbJ, PsbK, PsbL, PsbM, PsbT, PsbX, PsbY, PsbZ, Psb30/Ycf12, at least 3 peripheral proteins of the oxygen-evolving complex and a large number of cofactors. It forms dimeric complexes. The cofactor is The D1/D2 heterodimer binds P680, chlorophylls that are the primary electron donor of PSII, and subsequent electron acceptors. It shares a non-heme iron and each subunit binds pheophytin, quinone, additional chlorophylls, carotenoids and lipids. There is also a Cl(-1) ion associated with D1 and D2, which is required for oxygen evolution. The PSII complex binds additional chlorophylls, carotenoids and specific lipids..

It localises to the plastid. It is found in the chloroplast thylakoid membrane. The enzyme catalyses 2 a plastoquinone + 4 hnu + 2 H2O = 2 a plastoquinol + O2. Photosystem II (PSII) is a light-driven water:plastoquinone oxidoreductase that uses light energy to abstract electrons from H(2)O, generating O(2) and a proton gradient subsequently used for ATP formation. It consists of a core antenna complex that captures photons, and an electron transfer chain that converts photonic excitation into a charge separation. The D1/D2 (PsbA/PsbD) reaction center heterodimer binds P680, the primary electron donor of PSII as well as several subsequent electron acceptors. D2 is needed for assembly of a stable PSII complex. The chain is Photosystem II D2 protein from Stigeoclonium helveticum (Green alga).